We begin with the raw amino-acid sequence, 589 residues long: Sentrin-specific protease 2 (589 aa).

A Nuclear localization signal motif is present at residues 28–31 (KRRR). The residue at position 32 (S32) is a Phosphoserine. A Nuclear localization signal motif is present at residues 46-51 (PAKRPR). Residues 155-176 (SEGCNRRPGGRRHSKGNPESSL) form a disordered region. The Nuclear export signal motif lies at 317–332 (LEPDLSEEVSARLRLG). Phosphoserine is present on residues S333 and S344. The interval 396–560 (RITRGDIQTL…FTCKYADYIS (165 aa)) is protease. Catalysis depends on residues H478 and D495. C548 (nucleophile) is an active-site residue.

The protein belongs to the peptidase C48 family. As to quaternary structure, binds to SUMO2 and SUMO3. Interacts with the C-terminal domain of NUP153 via its N-terminus. Interacts with MTA1. Polyubiquitinated; which leads to proteasomal degradation.

Its subcellular location is the nucleus. It localises to the nuclear pore complex. It is found in the nucleus membrane. The protein resides in the cytoplasm. Protease that catalyzes two essential functions in the SUMO pathway. The first is the hydrolysis of an alpha-linked peptide bond at the C-terminal end of the small ubiquitin-like modifier (SUMO) propeptides, SUMO1, SUMO2 and SUMO3 leading to the mature form of the proteins. The second is the deconjugation of SUMO1, SUMO2 and SUMO3 from targeted proteins, by cleaving an epsilon-linked peptide bond between the C-terminal glycine of the mature SUMO and the lysine epsilon-amino group of the target protein. May down-regulate CTNNB1 levels and thereby modulate the Wnt pathway. Deconjugates SUMO2 from MTA1. Plays a dynamic role in adipogenesis by desumoylating and promoting the stabilization of CEBPB. Acts as a regulator of the cGAS-STING pathway by catalyzing desumoylation of CGAS and STING1 during the late phase of viral infection. This chain is Sentrin-specific protease 2, found in Homo sapiens (Human).